A 139-amino-acid chain; its full sequence is MAMSSLWWTAILLLALTVSMCYGVPTYQDFLYKHMDFPKTSFPSNAAYCNVMMVRRGMTAHGRCKSFNTFVHTDPRNLNTLCINQPDQALRTTRRHFRITDCKLIRSHPTCRYSGNQFNRRVRVGCRGGLPVHLDGTSP.

Positions 1 to 23 (MAMSSLWWTAILLLALTVSMCYG) are cleaved as a signal peptide. H34 functions as the Proton acceptor in the catalytic mechanism. Disulfide bonds link C49–C102, C64–C111, and C82–C126. Residue 65–69 (KSFNT) coordinates substrate. H133 acts as the Proton donor in catalysis.

This sequence belongs to the pancreatic ribonuclease family.

It localises to the secreted. This Gallus gallus (Chicken) protein is Ribonuclease homolog.